The sequence spans 86 residues: Small ribosomal subunit protein bS16 (86 aa).

This sequence belongs to the bacterial ribosomal protein bS16 family.

This is Small ribosomal subunit protein bS16 from Borreliella burgdorferi (strain ATCC 35210 / DSM 4680 / CIP 102532 / B31) (Borrelia burgdorferi).